Here is a 445-residue protein sequence, read N- to C-terminus: Mitochondrial-processing peptidase subunit alpha-2 (445 aa).

The N-terminal 13 residues, 1–13 (MIGRFIARNYTTS), are a transit peptide targeting the mitochondrion.

This sequence belongs to the peptidase M16 family. Heterodimer of alpha and beta subunits, forming the mitochondrial processing protease (MPP) in which subunit alpha is involved in substrate recognition and binding and subunit beta is the catalytic subunit.

It is found in the mitochondrion matrix. In terms of biological role, substrate recognition and binding subunit of the essential mitochondrial processing protease (MPP), which cleaves the mitochondrial sequence off newly imported precursors proteins. This is Mitochondrial-processing peptidase subunit alpha-2 (mppA2) from Dictyostelium discoideum (Social amoeba).